The sequence spans 935 residues: uncharacterized protein (935 aa).

9 disordered regions span residues 1–32 (MDIG…QNNN), 74–228 (NNNN…YNNG), 265–287 (NNEN…NNNN), 342–376 (NQQK…SSKT), 394–414 (SPTQ…QQQY), 466–491 (KNIN…NNNI), 516–559 (PHQQ…TSTI), 727–755 (SPSS…ISPS), and 778–799 (GGGS…NVQN). The segment covering 74-227 (NNNNNTTNNN…NNNDDNIYNN (154 aa)) has biased composition (low complexity). Positions 262 to 331 (KKNNNENKKK…NNINNNNNKI (70 aa)) form a coiled coil. Residues 265 to 274 (NNENKKKNND) show a composition bias toward basic and acidic residues. Low complexity predominate over residues 275–287 (NENNNYPNFNNNN). The span at 367 to 376 (LSHNSESSKT) shows a compositional bias: polar residues. Low complexity predominate over residues 397–414 (QQQQQQQQQQQQQQQQQY). The segment covering 522–559 (SSPTSSSTSTSSTTSSSSSSSSSSSSSSSSSTSSTSTI) has biased composition (low complexity). Residues 778 to 791 (GGGSSGGGGSGGGV) are compositionally biased toward gly residues.

This is an uncharacterized protein from Dictyostelium discoideum (Social amoeba).